A 144-amino-acid polypeptide reads, in one-letter code: Large ribosomal subunit protein uL11 (144 aa).

It belongs to the universal ribosomal protein uL11 family. Part of the ribosomal stalk of the 50S ribosomal subunit. Interacts with L10 and the large rRNA to form the base of the stalk. L10 forms an elongated spine to which L12 dimers bind in a sequential fashion forming a multimeric L10(L12)X complex. One or more lysine residues are methylated.

In terms of biological role, forms part of the ribosomal stalk which helps the ribosome interact with GTP-bound translation factors. This chain is Large ribosomal subunit protein uL11, found in Marinomonas sp. (strain MWYL1).